Consider the following 178-residue polypeptide: Caveolin-1 (178 aa).

Residue S2 is modified to N-acetylserine. A Phosphoserine modification is found at S2. The tract at residues 2–94 is required for homooligomerization; that stretch reads SGGKYVDSEG…WKASFTTFTV (93 aa). The Cytoplasmic segment spans residues 2–104; sequence SGGKYVDSEG…TKYWFYRLLS (103 aa). K5 bears the N6-acetyllysine; alternate mark. K5 participates in a covalent cross-link: Glycyl lysine isopeptide (Lys-Gly) (interchain with G-Cter in ubiquitin); alternate. Residue Y6 is modified to Phosphotyrosine. Phosphoserine is present on S9. Y14 carries the phosphotyrosine; by ABL1 modification. Position 25 is a phosphotyrosine (Y25). Residues K26 and K30 each participate in a glycyl lysine isopeptide (Lys-Gly) (interchain with G-Cter in ubiquitin) cross-link. A Phosphoserine modification is found at S37. Residues K39, K47, and K57 each participate in a glycyl lysine isopeptide (Lys-Gly) (interchain with G-Cter in ubiquitin) cross-link. The tract at residues 82 to 94 is interaction with CAVIN3; the sequence is DGIWKASFTTFTV. The segment at residues 105–125 is an intramembrane region (helical); sequence ALFGIPMALVWGIYFAILSFL. The Cytoplasmic portion of the chain corresponds to 126–178; that stretch reads HIWAVVPCIKSFLIEIQCISRVYSIYVHTVCDPLFEAVGKIFSNVRINLQKEI. The segment at 131-142 is interacts with SPRY1, SPRY2, SPRY3 and SPRY4; sequence VPCIKSFLIEIQ. 3 S-palmitoyl cysteine lipidation sites follow: C133, C143, and C156. The segment at 149-160 is interacts with SPRY1, SPRY2, and SPRY4; that stretch reads SIYVHTVCDPLF. The segment at 167–178 is interacts with SPRY1, SPRY2, SPRY3 and SPRY4; it reads FSNVRINLQKEI.

It belongs to the caveolin family. As to quaternary structure, homooligomer. Interacts with GLIPR2. Interacts with NOSTRIN. Interacts with SNAP25 and STX1A. Interacts (via the N-terminus) with DPP4; the interaction is direct. Interacts with CTNNB1, CDH1 and JUP. Interacts with PACSIN2; this interaction induces membrane tubulation. Interacts with SLC7A9. Interacts with BMX and BTK. Interacts with TGFBR1. Interacts with CAVIN3 (via leucine-zipper domain) in a cholesterol-sensitive manner. Interacts with CAVIN1. Interacts with EHD2 in a cholesterol-dependent manner. Forms a ternary complex with UBXN6 and VCP; mediates CAV1 targeting to lysosomes for degradation. Interacts with ABCG1; this interaction regulates ABCG1-mediated cholesterol efflux. Interacts with NEU3; this interaction enhances NEU3 sialidase activity within caveola. Interacts (via C-terminus) with SPRY1, SPRY2 (via C-terminus), SPRY3, and SPRY4. Interacts with IGFBP5; this interaction allows trafficking of IGFBP5 from the plasma membrane to the nucleus. In terms of processing, phosphorylated at Tyr-14 by ABL1 in response to oxidative stress. Post-translationally, ubiquitinated. Undergo monoubiquitination and multi- and/or polyubiquitination. Monoubiquitination of N-terminal lysines promotes integration in a ternary complex with UBXN6 and VCP which promotes oligomeric CAV1 targeting to lysosomes for degradation. Ubiquitinated by ZNRF1; leading to degradation and modulation of the TLR4-mediated immune response.

Its subcellular location is the golgi apparatus membrane. The protein localises to the cell membrane. It localises to the membrane. The protein resides in the caveola. It is found in the membrane raft. Its function is as follows. May act as a scaffolding protein within caveolar membranes. Forms a stable heterooligomeric complex with CAV2 that targets to lipid rafts and drives caveolae formation. Mediates the recruitment of CAVIN proteins (CAVIN1/2/3/4) to the caveolae. Interacts directly with G-protein alpha subunits and can functionally regulate their activity. Involved in the costimulatory signal essential for T-cell receptor (TCR)-mediated T-cell activation. Its binding to DPP4 induces T-cell proliferation and NF-kappa-B activation in a T-cell receptor/CD3-dependent manner. Recruits CTNNB1 to caveolar membranes and may regulate CTNNB1-mediated signaling through the Wnt pathway. Negatively regulates TGFB1-mediated activation of SMAD2/3 by mediating the internalization of TGFBR1 from membrane rafts leading to its subsequent degradation. Binds 20(S)-hydroxycholesterol (20(S)-OHC). This is Caveolin-1 (CAV1) from Papio anubis (Olive baboon).